The sequence spans 190 residues: Ribosome hibernation promotion factor (190 aa).

Belongs to the HPF/YfiA ribosome-associated protein family. Long HPF subfamily. As to quaternary structure, interacts with 100S ribosomes.

Its subcellular location is the cytoplasm. In terms of biological role, required for dimerization of active 70S ribosomes into 100S ribosomes in stationary phase; 100S ribosomes are translationally inactive and sometimes present during exponential growth. This is Ribosome hibernation promotion factor from Rhizobium meliloti (strain 1021) (Ensifer meliloti).